Consider the following 93-residue polypeptide: Large ribosomal subunit protein mL41 (93 aa).

Residues 1 to 13 (MHQSLLCFGARRL) constitute a mitochondrion transit peptide.

The protein belongs to the mitochondrion-specific ribosomal protein mL41 family. In terms of assembly, component of the mitochondrial large ribosomal subunit (mt-LSU). Mature yeast 74S mitochondrial ribosomes consist of a small (37S) and a large (54S) subunit. The 37S small subunit contains a 15S ribosomal RNA (15S mt-rRNA) and at least 32 different proteins. The 54S large subunit contains a 21S rRNA (21S mt-rRNA) and at least 45 different proteins.

It localises to the mitochondrion. Component of the mitochondrial ribosome (mitoribosome), a dedicated translation machinery responsible for the synthesis of mitochondrial genome-encoded proteins, including at least some of the essential transmembrane subunits of the mitochondrial respiratory chain. The mitoribosomes are attached to the mitochondrial inner membrane and translation products are cotranslationally integrated into the membrane. In Schizosaccharomyces pombe (strain 972 / ATCC 24843) (Fission yeast), this protein is Large ribosomal subunit protein mL41 (mrpl27).